A 330-amino-acid polypeptide reads, in one-letter code: Adenylate isopentenyltransferase 5, chloroplastic (330 aa).

Residues 1–39 constitute a chloroplast transit peptide; that stretch reads MKPCMTALRQVIQPLSLNFQGNMVDVPFFRRKDKVVFVM. 40–47 is an ATP binding site; that stretch reads GATGTGKS.

Belongs to the IPP transferase family. Expressed in root primordia, columella root caps, upper part of young inflorescences, and fruit abscission zones.

It localises to the plastid. It is found in the chloroplast. It carries out the reaction dimethylallyl diphosphate + ADP = N(6)-(dimethylallyl)adenosine 5'-diphosphate + diphosphate. It catalyses the reaction dimethylallyl diphosphate + ATP = N(6)-(dimethylallyl)adenosine 5'-triphosphate + diphosphate. Functionally, involved in cytokinin biosynthesis. Catalyzes the transfer of an isopentenyl group from dimethylallyl diphosphate (DMAPP) to ATP and ADP. The protein is Adenylate isopentenyltransferase 5, chloroplastic (IPT5) of Arabidopsis thaliana (Mouse-ear cress).